The primary structure comprises 92 residues: Large ribosomal subunit protein bL27 (92 aa).

The segment at 1–26 (MAHKKGASSSSNGRDSESKRLGVKRF) is disordered.

The protein belongs to the bacterial ribosomal protein bL27 family.

The protein is Large ribosomal subunit protein bL27 of Corynebacterium aurimucosum (strain ATCC 700975 / DSM 44827 / CIP 107346 / CN-1) (Corynebacterium nigricans).